Reading from the N-terminus, the 123-residue chain is Large ribosomal subunit protein uL24 (123 aa).

Belongs to the universal ribosomal protein uL24 family. As to quaternary structure, part of the 50S ribosomal subunit.

Its function is as follows. One of two assembly initiator proteins, it binds directly to the 5'-end of the 23S rRNA, where it nucleates assembly of the 50S subunit. In terms of biological role, one of the proteins that surrounds the polypeptide exit tunnel on the outside of the subunit. The sequence is that of Large ribosomal subunit protein uL24 from Solibacter usitatus (strain Ellin6076).